The primary structure comprises 276 residues: Vitamin B12-binding protein (276 aa).

An N-terminal signal peptide occupies residues 1 to 20; that stretch reads MLVIRLIACTFLFITPSLLA. The Fe/B12 periplasmic-binding domain maps to 27 to 274; it reads RIISLAPHAT…QVCTYLKIAQ (248 aa). Tyrosine 54 is a binding site for cyanocob(III)alamin. Cysteine 187 and cysteine 267 form a disulfide bridge.

This sequence belongs to the BtuF family. As to quaternary structure, the complex is composed of two ATP-binding proteins (BtuD), two transmembrane proteins (BtuC) and a solute-binding protein (BtuF).

It localises to the periplasm. Functionally, part of the ABC transporter complex BtuCDF involved in vitamin B12 import. Binds vitamin B12 and delivers it to the periplasmic surface of BtuC. In Vibrio cholerae serotype O1 (strain ATCC 39541 / Classical Ogawa 395 / O395), this protein is Vitamin B12-binding protein.